A 211-amino-acid chain; its full sequence is ATP phosphoribosyltransferase (211 aa).

It belongs to the ATP phosphoribosyltransferase family. Short subfamily. Heteromultimer composed of HisG and HisZ subunits.

It is found in the cytoplasm. The enzyme catalyses 1-(5-phospho-beta-D-ribosyl)-ATP + diphosphate = 5-phospho-alpha-D-ribose 1-diphosphate + ATP. The protein operates within amino-acid biosynthesis; L-histidine biosynthesis; L-histidine from 5-phospho-alpha-D-ribose 1-diphosphate: step 1/9. Its function is as follows. Catalyzes the condensation of ATP and 5-phosphoribose 1-diphosphate to form N'-(5'-phosphoribosyl)-ATP (PR-ATP). Has a crucial role in the pathway because the rate of histidine biosynthesis seems to be controlled primarily by regulation of HisG enzymatic activity. The chain is ATP phosphoribosyltransferase from Ectopseudomonas mendocina (strain ymp) (Pseudomonas mendocina).